The primary structure comprises 185 residues: ATP synthase subunit delta, chloroplastic (185 aa).

Belongs to the ATPase delta chain family. As to quaternary structure, F-type ATPases have 2 components, F(1) - the catalytic core - and F(0) - the membrane proton channel. F(1) has five subunits: alpha(3), beta(3), gamma(1), delta(1), epsilon(1). CF(0) has four main subunits: a(1), b(1), b'(1) and c(10-14). The alpha and beta chains form an alternating ring which encloses part of the gamma chain. F(1) is attached to F(0) by a central stalk formed by the gamma and epsilon chains, while a peripheral stalk is formed by the delta, b and b' chains.

It is found in the plastid. Its subcellular location is the chloroplast thylakoid membrane. Functionally, f(1)F(0) ATP synthase produces ATP from ADP in the presence of a proton or sodium gradient. F-type ATPases consist of two structural domains, F(1) containing the extramembraneous catalytic core and F(0) containing the membrane proton channel, linked together by a central stalk and a peripheral stalk. During catalysis, ATP synthesis in the catalytic domain of F(1) is coupled via a rotary mechanism of the central stalk subunits to proton translocation. In terms of biological role, this protein is part of the stalk that links CF(0) to CF(1). It either transmits conformational changes from CF(0) to CF(1) or is implicated in proton conduction. The chain is ATP synthase subunit delta, chloroplastic from Guillardia theta (Cryptophyte).